The primary structure comprises 445 residues: GRAM domain-containing protein 2B (445 aa).

The residue at position 1 (M1) is an N-acetylmethionine. Positions 1–10 are enriched in polar residues; sequence MVKKPISSSD. The segment at 1-119 is disordered; that stretch reads MVKKPISSSD…RKKSSSSSQY (119 aa). Residues 18 to 37 show a composition bias toward low complexity; sequence PSSPKSSAGASHSSTDSPSS. 2 stretches are compositionally biased toward polar residues: residues 56-68 and 82-93; these read KSPTAQSPTSSVE and SKSSFDGSNLLS. Positions 94-112 are enriched in basic and acidic residues; it reads DKNDCKTESKADSKTERKK. Positions 123-190 constitute a GRAM domain; that stretch reads MHFHKLFLDV…FSVTLIKKTK (68 aa). Residues S238, S255, and S265 each carry the phosphoserine modification. The interval 277–331 is disordered; sequence DLEGYSSSGSQTPESENSRDFHVTESQTVLNVTKGETKPPRTDAHGSRAPDGKAK. The segment covering 281 to 291 has biased composition (polar residues); sequence YSSSGSQTPES. The segment covering 311-330 has biased composition (basic and acidic residues); sequence GETKPPRTDAHGSRAPDGKA.

This chain is GRAM domain-containing protein 2B (Gramd2b), found in Rattus norvegicus (Rat).